The chain runs to 868 residues: Probable mixed-linked glucan synthase 3 (868 aa).

Positions 36 to 68 are disordered; the sequence is ERKAAGGGGGGAKGKHWAAADKGERRAAKECGG. The segment covering 53–68 has biased composition (basic and acidic residues); it reads AAADKGERRAAKECGG. 2 consecutive transmembrane segments (helical) span residues 86-106 and 116-136; these read LLHP…LFFG and IMWF…SWLL. D211 is a catalytic residue. 2 residues coordinate substrate: D412 and D414. D573 is an active-site residue. A run of 6 helical transmembrane segments spans residues 649–669, 686–706, 717–737, 771–791, 810–830, and 838–858; these read IYPV…MWLI, LLVI…WAGI, FFMI…VVNL, MLIP…VAIG, MGLL…LAIM, and IILV…YVAT.

It belongs to the glycosyltransferase 2 family. Plant cellulose synthase-like F subfamily.

It is found in the golgi apparatus membrane. In terms of biological role, may catalyze both beta-1,3 and beta-1,4 glycosidic linkage on beta-D-glucan. Essential for (1,3;1,4)-beta-D-glucans synthesis in grasses and cereals (Poaceae). The mixed-linked glucans (which are not present in walls of dicotyledons or most other monocotyledonous plants) are particularly important constituents of the walls of the starchy endosperm and aleurone cells of cereal grains such as oats, wheat, rice and barley. They can account for up to 70% by weight of the wall. In Oryza sativa subsp. japonica (Rice), this protein is Probable mixed-linked glucan synthase 3 (CSLF3).